Here is a 228-residue protein sequence, read N- to C-terminus: UPF0328 protein ECU07_0040 (228 aa).

Belongs to the UPF0328 family.

The protein is UPF0328 protein ECU07_0040 of Encephalitozoon cuniculi (strain GB-M1) (Microsporidian parasite).